A 201-amino-acid polypeptide reads, in one-letter code: Orotate phosphoribosyltransferase (201 aa).

113–121 provides a ligand contact to 5-phospho-alpha-D-ribose 1-diphosphate; the sequence is EDIITTGKS. Residues Thr-117 and Arg-145 each contribute to the orotate site.

It belongs to the purine/pyrimidine phosphoribosyltransferase family. PyrE subfamily. In terms of assembly, homodimer. Mg(2+) is required as a cofactor.

It carries out the reaction orotidine 5'-phosphate + diphosphate = orotate + 5-phospho-alpha-D-ribose 1-diphosphate. It participates in pyrimidine metabolism; UMP biosynthesis via de novo pathway; UMP from orotate: step 1/2. Functionally, catalyzes the transfer of a ribosyl phosphate group from 5-phosphoribose 1-diphosphate to orotate, leading to the formation of orotidine monophosphate (OMP). This Helicobacter pylori (strain Shi470) protein is Orotate phosphoribosyltransferase.